Here is an 869-residue protein sequence, read N- to C-terminus: H(+)/Cl(-) exchange transporter 6 (869 aa).

The Cytoplasmic segment spans residues 1–80 (MAGCRGSLCC…KKGRRYEAVK (80 aa)). Helical transmembrane passes span 81 to 113 (WMVV…FGVV) and 128 to 150 (LSLL…LVLI). Residues 156-160 (GSGIP) carry the Selectivity filter part_1 motif. S157 contributes to the chloride binding site. Residues 159–166 (IPEVKCYL) constitute an intramembrane region (helical). Transmembrane regions (helical) follow at residues 176-194 (RLRT…VAGG) and 200-217 (EGPM…LPQF). Residues 198–202 (EKEGP) carry the Selectivity filter part_2 motif. 2 intramembrane regions (helical) span residues 241 to 253 (FVSA…VAAA) and 257 to 265 (PIGGTLFSL). The next 3 membrane-spanning stretches (helical) occupy residues 277 to 294 (TWKV…LNFF), 335 to 364 (GFFV…YRMR), and 371 to 392 (KLVR…VFVA). N-linked (GlcNAc...) asparagine glycosylation is found at N410, N422, and N432. The next 2 helical transmembrane spans lie at 462 to 481 (PVTL…WTYG) and 487 to 511 (GLFV…KSYI). The Selectivity filter part_3 signature appears at 487-491 (GLFVP). A chloride-binding site is contributed by F489. The segment at residues 519–533 (GTFALIGAAAFLGGV) is an intramembrane region (helical). An intramembrane region (note=Loop between two helices) is located at residues 534 to 536 (VRM). Positions 537–548 (TISLTVILIEST) form an intramembrane region, helical. Positions 549-552 (NEIT) form an intramembrane region, note=Loop between two helices. A helical membrane pass occupies residues 553–571 (YGLPIMVTLMVAKWTGDFF). The Cytoplasmic portion of the chain corresponds to 572 to 869 (NKGIYDIHVG…ARLRQHYQTI (298 aa)). Residue Y576 participates in chloride binding. In terms of domain architecture, CBS 1 spans 605 to 662 (MEPNLTYVYPHTRIQSLVSILRTTVHHAFPVVTENRGNEKEFMKGNQLISNNIKFKKS). 630–632 (HHA) is a binding site for ATP. S773 carries the phosphoserine modification. The region spanning 807 to 868 (MNPSPFTVSP…QARLRQHYQT (62 aa)) is the CBS 2 domain. 849–852 (TRHN) provides a ligand contact to ATP.

The protein belongs to the chloride channel (TC 2.A.49) family. ClC-6/CLCN6 subfamily. Post-translationally, N-glycosylated on several asparagine residues. In terms of tissue distribution, testis, ovary, small intestine, brain and skeletal muscle. Low level expression in aortic and coronary vascular smooth muscle cells, and aortic endothelial cells. Isoform 3 is only detected in kidney.

The protein resides in the late endosome membrane. The enzyme catalyses 2 chloride(in) + H(+)(out) = 2 chloride(out) + H(+)(in). Functionally, voltage-gated channel mediating the exchange of chloride ions against protons. Functions as antiporter and contributes to the acidification of the late endosome lumen. The CLC channel family contains both chloride channels and proton-coupled anion transporters that exchange chloride or another anion for protons. The presence of conserved gating glutamate residues is typical for family members that function as antiporters. In Homo sapiens (Human), this protein is H(+)/Cl(-) exchange transporter 6.